The chain runs to 399 residues: Phosphoglycerate kinase (399 aa).

Residues 22–24 (DFN), Arg38, 61–64 (HLGR), Arg120, and Arg153 contribute to the substrate site. ATP-binding positions include Lys204, Glu326, and 353–356 (GGDT).

This sequence belongs to the phosphoglycerate kinase family. As to quaternary structure, monomer.

It is found in the cytoplasm. It catalyses the reaction (2R)-3-phosphoglycerate + ATP = (2R)-3-phospho-glyceroyl phosphate + ADP. It participates in carbohydrate degradation; glycolysis; pyruvate from D-glyceraldehyde 3-phosphate: step 2/5. This Geotalea daltonii (strain DSM 22248 / JCM 15807 / FRC-32) (Geobacter daltonii) protein is Phosphoglycerate kinase.